Reading from the N-terminus, the 664-residue chain is Macoilin (664 aa).

Transmembrane regions (helical) follow at residues 28 to 48 (TFLY…DFVL), 75 to 95 (AFSV…LLFI), 120 to 140 (VCLP…AIRF), and 154 to 174 (FAAH…KSYV). Residues 253 to 265 (REKGKEKDKDAKK) are compositionally biased toward basic and acidic residues. Residues 253-274 (REKGKEKDKDAKKHNLGINNNN) are disordered. Serine 305 is modified (phosphoserine). Polar residues predominate over residues 320–348 (KNYKNASGVVNSSPRSHSATNGSIPSSSS). The tract at residues 320-375 (KNYKNASGVVNSSPRSHSATNGSIPSSSSKNEKKQKCTSKGPSAHKDLMENCIPNN) is disordered. N-linked (GlcNAc...) asparagine glycosylation is present at asparagine 324. Serine 332 bears the Phosphoserine mark. Asparagine 340 and asparagine 452 each carry an N-linked (GlcNAc...) asparagine glycan. Positions 630 to 664 (TSPLSPVSPHYSSKFVETSPSGLDPNASVYQPLKK) are disordered. Residues serine 631 and serine 634 each carry the phosphoserine modification. An N-linked (GlcNAc...) asparagine glycan is attached at asparagine 655.

The protein belongs to the macoilin family. Strong expression in whole nervous system up to 12.5 dpc. Highly expressed in all neuronal differentiation fields from 14.5 dpc to birth, with highest expression in the telencephalic cortical plate and mitral cells in the olfactory bulb, and lower expression in neuronal progenitor zones. Progressively decreased expression in fields of neuron precursor proliferation from 14.5 dpc and virtually undetectable there by 17.5 dpc. No significant expression detected outside the nervous system. After birth, significant expression remains in the cerebellum, olfactory bulb and hippocampus.

Its subcellular location is the rough endoplasmic reticulum membrane. It is found in the nucleus membrane. In terms of biological role, plays a role in the regulation of neuronal activity. The polypeptide is Macoilin (Maco1) (Mus musculus (Mouse)).